Consider the following 374-residue polypeptide: S-adenosylmethionine:tRNA ribosyltransferase-isomerase (374 aa).

The protein belongs to the QueA family. As to quaternary structure, monomer.

Its subcellular location is the cytoplasm. It catalyses the reaction 7-aminomethyl-7-carbaguanosine(34) in tRNA + S-adenosyl-L-methionine = epoxyqueuosine(34) in tRNA + adenine + L-methionine + 2 H(+). Its pathway is tRNA modification; tRNA-queuosine biosynthesis. Functionally, transfers and isomerizes the ribose moiety from AdoMet to the 7-aminomethyl group of 7-deazaguanine (preQ1-tRNA) to give epoxyqueuosine (oQ-tRNA). This chain is S-adenosylmethionine:tRNA ribosyltransferase-isomerase, found in Prochlorococcus marinus (strain AS9601).